The sequence spans 485 residues: Glutamyl-tRNA(Gln) amidotransferase subunit A (485 aa).

Catalysis depends on charge relay system residues Lys-78 and Ser-153. Ser-177 acts as the Acyl-ester intermediate in catalysis.

The protein belongs to the amidase family. GatA subfamily. As to quaternary structure, heterotrimer of A, B and C subunits.

The enzyme catalyses L-glutamyl-tRNA(Gln) + L-glutamine + ATP + H2O = L-glutaminyl-tRNA(Gln) + L-glutamate + ADP + phosphate + H(+). Its function is as follows. Allows the formation of correctly charged Gln-tRNA(Gln) through the transamidation of misacylated Glu-tRNA(Gln) in organisms which lack glutaminyl-tRNA synthetase. The reaction takes place in the presence of glutamine and ATP through an activated gamma-phospho-Glu-tRNA(Gln). The sequence is that of Glutamyl-tRNA(Gln) amidotransferase subunit A from Geobacter sp. (strain M21).